A 418-amino-acid polypeptide reads, in one-letter code: 26S proteasome regulatory subunit 6B (418 aa).

Position 1 is an N-acetylmethionine (Met-1). Ser-21 carries the post-translational modification Phosphoserine. A Phosphothreonine modification is found at Thr-25. Ser-28 bears the Phosphoserine mark. 206 to 213 (GPPGCGKT) is an ATP binding site. An N6-acetyllysine mark is found at Lys-397 and Lys-401.

The protein belongs to the AAA ATPase family. Component of the 19S proteasome regulatory particle complex. The 26S proteasome consists of a 20S core particle (CP) and two 19S regulatory subunits (RP). The regulatory particle is made of a lid composed of 9 subunits, a base containing 6 ATPases including PSMC4 and few additional components. Interacts with NR1I3. Interacts with PAAF1. Interacts with TRIM5. Interacts with ZFAND1.

The protein resides in the cytoplasm. It is found in the nucleus. Component of the 26S proteasome, a multiprotein complex involved in the ATP-dependent degradation of ubiquitinated proteins. This complex plays a key role in the maintenance of protein homeostasis by removing misfolded or damaged proteins, which could impair cellular functions, and by removing proteins whose functions are no longer required. Therefore, the proteasome participates in numerous cellular processes, including cell cycle progression, apoptosis, or DNA damage repair. PSMC4 belongs to the heterohexameric ring of AAA (ATPases associated with diverse cellular activities) proteins that unfolds ubiquitinated target proteins that are concurrently translocated into a proteolytic chamber and degraded into peptides. This chain is 26S proteasome regulatory subunit 6B (Psmc4), found in Mus musculus (Mouse).